Here is a 575-residue protein sequence, read N- to C-terminus: Phosphoenolpyruvate-protein phosphotransferase (575 aa).

Residue His191 is the Tele-phosphohistidine intermediate of the active site. The phosphoenolpyruvate site is built by Arg298 and Arg334. 2 residues coordinate Mg(2+): Glu435 and Asp459. Phosphoenolpyruvate is bound by residues 458 to 459 (ND) and Arg469. Cys506 serves as the catalytic Proton donor.

Belongs to the PEP-utilizing enzyme family. Homodimer. Requires Mg(2+) as cofactor.

The protein localises to the cytoplasm. The catalysed reaction is L-histidyl-[protein] + phosphoenolpyruvate = N(pros)-phospho-L-histidyl-[protein] + pyruvate. General (non sugar-specific) component of the phosphoenolpyruvate-dependent sugar phosphotransferase system (sugar PTS). This major carbohydrate active-transport system catalyzes the phosphorylation of incoming sugar substrates concomitantly with their translocation across the cell membrane. Enzyme I transfers the phosphoryl group from phosphoenolpyruvate (PEP) to the phosphoryl carrier protein (HPr). This Enterococcus faecalis (strain ATCC 700802 / V583) protein is Phosphoenolpyruvate-protein phosphotransferase (ptsI).